The primary structure comprises 466 residues: Ribulose bisphosphate carboxylase large chain (466 aa).

N6,N6,N6-trimethyllysine is present on Lys5. The substrate site is built by Asn114 and Thr164. The Proton acceptor role is filled by Lys166. Substrate is bound at residue Lys168. Mg(2+)-binding residues include Lys192, Asp194, and Glu195. An N6-carboxylysine modification is found at Lys192. His285 (proton acceptor) is an active-site residue. The substrate site is built by Arg286, His318, and Ser370.

Belongs to the RuBisCO large chain family. Type I subfamily. As to quaternary structure, heterohexadecamer of 8 large chains and 8 small chains; disulfide-linked. The disulfide link is formed within the large subunit homodimers. Requires Mg(2+) as cofactor. In terms of processing, the disulfide bond which can form in the large chain dimeric partners within the hexadecamer appears to be associated with oxidative stress and protein turnover.

Its subcellular location is the plastid. The protein localises to the chloroplast. It carries out the reaction 2 (2R)-3-phosphoglycerate + 2 H(+) = D-ribulose 1,5-bisphosphate + CO2 + H2O. It catalyses the reaction D-ribulose 1,5-bisphosphate + O2 = 2-phosphoglycolate + (2R)-3-phosphoglycerate + 2 H(+). Its function is as follows. RuBisCO catalyzes two reactions: the carboxylation of D-ribulose 1,5-bisphosphate, the primary event in carbon dioxide fixation, as well as the oxidative fragmentation of the pentose substrate in the photorespiration process. Both reactions occur simultaneously and in competition at the same active site. In Thespesia populnea (Portia tree), this protein is Ribulose bisphosphate carboxylase large chain.